Consider the following 807-residue polypeptide: Spondin-1 (807 aa).

The N-terminal stretch at 1–28 is a signal peptide; the sequence is MRLSPVSLRLSRGPALLALALPLAAALA. Positions 29-194 constitute a Reelin domain; the sequence is FSDETLDKVT…DPTLDGVTDR (166 aa). Intrachain disulfides connect cysteine 44–cysteine 128, cysteine 156–cysteine 182, cysteine 199–cysteine 336, cysteine 200–cysteine 340, cysteine 202–cysteine 415, cysteine 443–cysteine 480, cysteine 454–cysteine 489, cysteine 459–cysteine 494, cysteine 502–cysteine 538, cysteine 513–cysteine 517, cysteine 548–cysteine 554, cysteine 559–cysteine 595, cysteine 570–cysteine 574, cysteine 605–cysteine 610, cysteine 615–cysteine 650, cysteine 626–cysteine 630, and cysteine 660–cysteine 665. Residues 195 to 388 enclose the Spondin domain; that stretch reads PILDCCACGT…LTSLDHPQSP (194 aa). Asparagine 214 is a glycosylation site (N-linked (GlcNAc...) asparagine). Ca(2+) contacts are provided by aspartate 325, aspartate 354, and aspartate 358. TSP type-1 domains follow at residues 442–495, 501–555, 558–611, 614–666, and 668–721; these read TCIY…PGCS, TCTM…EECS, SCLV…PECH, PCLL…PECP, and DCEL…RKCL. A glycan (N-linked (GlcNAc...) asparagine) is linked at asparagine 681. Residues 732-746 show a composition bias toward basic and acidic residues; it reads REARESRRSEQLREE. The disordered stretch occupies residues 732-752; sequence REARESRRSEQLREESDGEQF. Positions 754–806 constitute a TSP type-1 6 domain; that stretch reads GCRMRPWTAWSECTKLCGGGIQERYMTVKKRFKSSQFTSCKDKKEIRACNVHP.

In terms of assembly, binds to the central extracellular domain of APP and inhibits beta-secretase cleavage of APP.

The protein resides in the secreted. It is found in the extracellular space. The protein localises to the extracellular matrix. Its function is as follows. Cell adhesion protein that promotes the attachment of spinal cord and sensory neuron cells and the outgrowth of neurites in vitro. May contribute to the growth and guidance of axons in both the spinal cord and the PNS. The sequence is that of Spondin-1 (Spon1) from Mus musculus (Mouse).